The chain runs to 325 residues: BTB/POZ domain-containing protein KCTD12 (325 aa).

A disordered region spans residues 1–28 (MALADSTRGLPNGGGGGGGSGSSSSSAE). Residue Ala2 is modified to N-acetylalanine. The span at 11–21 (PNGGGGGGGSG) shows a compositional bias: gly residues. Tyr119 carries the post-translational modification Phosphotyrosine. The segment at 129-202 (LGAPQQPGPG…PLLTPSQSLD (74 aa)) is disordered. Residues Ser151, Ser171, and Ser185 each carry the phosphoserine modification. Phosphothreonine is present on Thr196. Ser200 carries the post-translational modification Phosphoserine.

As to quaternary structure, interacts as a tetramer with GABBR1 and GABBR2. Present in a variety of fetal organs, with highest expression levels in the cochlea and brain and, in stark contrast, is detected only at extremely low levels in adult organs, such as brain and lung.

It localises to the presynaptic cell membrane. The protein resides in the postsynaptic cell membrane. In terms of biological role, auxiliary subunit of GABA-B receptors that determine the pharmacology and kinetics of the receptor response. Increases agonist potency and markedly alter the G-protein signaling of the receptors by accelerating onset and promoting desensitization. This is BTB/POZ domain-containing protein KCTD12 (KCTD12) from Homo sapiens (Human).